The following is a 432-amino-acid chain: Adenylosuccinate synthetase (432 aa).

GTP contacts are provided by residues 12 to 18 (GDEGKGK) and 40 to 42 (GHT). Residue Asp13 is the Proton acceptor of the active site. Mg(2+) is bound by residues Asp13 and Gly40. IMP-binding positions include 13-16 (DEGK), 38-41 (NAGH), Thr132, Arg146, Gln226, Thr241, and Arg305. His41 (proton donor) is an active-site residue. Residue 301–307 (TVTGRKR) coordinates substrate. GTP contacts are provided by residues Arg307, 333–335 (KLD), and 415–417 (STS).

Belongs to the adenylosuccinate synthetase family. As to quaternary structure, homodimer. Mg(2+) is required as a cofactor.

The protein localises to the cytoplasm. It carries out the reaction IMP + L-aspartate + GTP = N(6)-(1,2-dicarboxyethyl)-AMP + GDP + phosphate + 2 H(+). Its pathway is purine metabolism; AMP biosynthesis via de novo pathway; AMP from IMP: step 1/2. Plays an important role in the de novo pathway of purine nucleotide biosynthesis. Catalyzes the first committed step in the biosynthesis of AMP from IMP. The sequence is that of Adenylosuccinate synthetase from Chelativorans sp. (strain BNC1).